The following is a 284-amino-acid chain: MEMO1 family protein SSO0066 (284 aa).

Belongs to the MEMO1 family.

In Saccharolobus solfataricus (strain ATCC 35092 / DSM 1617 / JCM 11322 / P2) (Sulfolobus solfataricus), this protein is MEMO1 family protein SSO0066.